Consider the following 188-residue polypeptide: Apolipoprotein M (188 aa).

Residues 1–22 constitute a signal peptide (not cleaved); the sequence is MFHQIWAALLYLYGILLNSIYQ. 3 cysteine pairs are disulfide-bonded: Cys23/Cys167, Cys95/Cys183, and Cys128/Cys157. Glu136 and Arg143 together coordinate tetradecanoate.

This sequence belongs to the calycin superfamily. Lipocalin family. Highly divergent. Interacts with LRP2; LRP2 mediates APOM renal uptake and subsequent lysosomal degradation.

Its subcellular location is the secreted. Its function is as follows. Probably involved in lipid transport. Can bind sphingosine-1-phosphate, myristic acid, palmitic acid and stearic acid, retinol, all-trans-retinoic acid and 9-cis-retinoic acid. This chain is Apolipoprotein M (APOM), found in Sus scrofa (Pig).